We begin with the raw amino-acid sequence, 256 residues long: MEVRKINTHNREKKLDDIVYDDFISTLRQIKEGNHQLREEFISEYKPFILKVTSNATGKYIDTRNSDEFSIALSAFNEAIDKFDIEKGYNFFLFSEQVIRRRLIDYSRSNKDDKEYPFSFFDDEYFYNNEKLLSKSYIGFEDIEAREDIEELKKKLQEFGITFLDLVLNVPKHRDSRQLCIRLAKMLAEDEQMYNALMKNKNIPRNELKKKAKVHGRTIGNNRKYIIALCLIFRSNLNLSKRYLEYYTMDGESDLI.

A Polymerase core binding motif is present at residues 67 to 80; sequence DEFSIALSAFNEAI. The segment at residues 205-224 is a DNA-binding region (H-T-H motif); the sequence is RNELKKKAKVHGRTIGNNRK.

Belongs to the sigma-70 factor family. SigI subfamily. Interacts with RsgI1.

The protein resides in the cytoplasm. With respect to regulation, negatively regulated by the anti-sigma-I factor RsgI1. Binding of the polysaccharide substrate to RsgI1 may lead to the release and activation of SigI1. In terms of biological role, sigma factors are initiation factors that promote the attachment of RNA polymerase to specific initiation sites and are then released. This sigma factor is involved in regulation of cellulosomal genes via an external polysaccharide-sensing mechanism. SigI1 promotes transcription from sigI1 and celS promoters. The chain is RNA polymerase sigma factor SigI1 from Acetivibrio thermocellus (strain ATCC 27405 / DSM 1237 / JCM 9322 / NBRC 103400 / NCIMB 10682 / NRRL B-4536 / VPI 7372) (Clostridium thermocellum).